A 104-amino-acid chain; its full sequence is Cytochrome c oxidase assembly factor 6 (104 aa).

Positions 1–22 (MGLFSFDGGKKESQPPNTRSQR) are disordered. The region spanning 22–76 (RKLCWESRDAFFQCLDKADILDAMDPKNSKSIKSHCKVENEKFEENCAHSWIKYF) is the CHCH domain. A Cx9C motif motif is present at residues 25 to 35 (CWESRDAFFQC). Intrachain disulfides connect C25–C68 and C35–C57. The Cx10C motif signature appears at 57-68 (CKVENEKFEENC).

It belongs to the cytochrome c oxidase subunit 6B family. In terms of assembly, interacts with COX2.

It is found in the cytoplasm. Its subcellular location is the nucleus. The protein resides in the mitochondrion intermembrane space. Involved in the maturation of the mitochondrial respiratory chain complex IV subunit MT-CO2/COX2. Thereby, may regulate early steps of complex IV assembly. Mitochondrial respiratory chain complex IV or cytochrome c oxidase is the component of the respiratory chain that catalyzes the transfer of electrons from intermembrane space cytochrome c to molecular oxygen in the matrix and as a consequence contributes to the proton gradient involved in mitochondrial ATP synthesis. May also be required for efficient formation of respiratory supercomplexes comprised of complexes III and IV. The sequence is that of Cytochrome c oxidase assembly factor 6 from Saccharomyces cerevisiae (strain ATCC 204508 / S288c) (Baker's yeast).